The sequence spans 148 residues: Large ribosomal subunit protein bL9 (148 aa).

Belongs to the bacterial ribosomal protein bL9 family.

Its function is as follows. Binds to the 23S rRNA. The polypeptide is Large ribosomal subunit protein bL9 (Chromohalobacter salexigens (strain ATCC BAA-138 / DSM 3043 / CIP 106854 / NCIMB 13768 / 1H11)).